The sequence spans 309 residues: Olfactory receptor 1A1 (309 aa).

Topologically, residues 1 to 25 (MRENNQSSTLEFILLGVTGQQEQED) are extracellular. Asparagine 5 carries an N-linked (GlcNAc...) asparagine glycan. A helical membrane pass occupies residues 26–49 (FFYILFLFIYPITLIGNLLIVLAI). At 50 to 57 (CSDVHLHN) the chain is on the cytoplasmic side. Residues 58 to 79 (PMYFLLANLSLVDIFFSSVTIP) form a helical membrane-spanning segment. Topologically, residues 80-100 (KMLANHLSGSKSISFGGCLTQ) are extracellular. Cysteine 97 and cysteine 189 form a disulfide bridge. A helical transmembrane segment spans residues 101–120 (MYFMIDLGNTDSYTLAAMAY). The Cytoplasmic segment spans residues 121–139 (DRAVAISRPLHYTTIMSPR). Residues 140–158 (SCIWLIAGSWVIGNANALP) traverse the membrane as a helical segment. Over 159-195 (HTLLTASLSFCGNQEVANFYCDITPLLKLSCSDIHFH) the chain is Extracellular. The chain crosses the membrane as a helical span at residues 196-218 (VKMMYLGVGIFSVPLLCIIVSYI). Residues 219–235 (RVFSTVFQVPSTKGVLK) are Cytoplasmic-facing. A helical transmembrane segment spans residues 236 to 258 (AFSTCGSHLTVVSLYYGTVMGMY). Over 259–270 (FRPLTNYSLKDA) the chain is Extracellular. Asparagine 264 carries an N-linked (GlcNAc...) asparagine glycan. The helical transmembrane segment at 271 to 290 (VITVMCTAVTPMLNPFIYSL) threads the bilayer. Topologically, residues 291–309 (RNRDMKAALQKLFNKRISS) are cytoplasmic.

Belongs to the G-protein coupled receptor 1 family.

The protein localises to the cell membrane. Functionally, odorant receptor. In Gorilla gorilla gorilla (Western lowland gorilla), this protein is Olfactory receptor 1A1 (OR1A1).